The primary structure comprises 360 residues: Chorismate synthase (360 aa).

Arg47 is an NADP(+) binding site. FMN is bound by residues 124–126 (RAS), Gly286, 301–305 (KPTAT), and Arg327.

It belongs to the chorismate synthase family. In terms of assembly, homotetramer. The cofactor is FMNH2.

The catalysed reaction is 5-O-(1-carboxyvinyl)-3-phosphoshikimate = chorismate + phosphate. It participates in metabolic intermediate biosynthesis; chorismate biosynthesis; chorismate from D-erythrose 4-phosphate and phosphoenolpyruvate: step 7/7. Catalyzes the anti-1,4-elimination of the C-3 phosphate and the C-6 proR hydrogen from 5-enolpyruvylshikimate-3-phosphate (EPSP) to yield chorismate, which is the branch point compound that serves as the starting substrate for the three terminal pathways of aromatic amino acid biosynthesis. This reaction introduces a second double bond into the aromatic ring system. This is Chorismate synthase from Synechococcus sp. (strain RCC307).